We begin with the raw amino-acid sequence, 156 residues long: 3-hydroxyacyl-[acyl-carrier-protein] dehydratase FabZ (156 aa).

Residue H61 is part of the active site.

It belongs to the thioester dehydratase family. FabZ subfamily.

The protein resides in the cytoplasm. The enzyme catalyses a (3R)-hydroxyacyl-[ACP] = a (2E)-enoyl-[ACP] + H2O. In terms of biological role, involved in unsaturated fatty acids biosynthesis. Catalyzes the dehydration of short chain beta-hydroxyacyl-ACPs and long chain saturated and unsaturated beta-hydroxyacyl-ACPs. The polypeptide is 3-hydroxyacyl-[acyl-carrier-protein] dehydratase FabZ (Acaryochloris marina (strain MBIC 11017)).